A 466-amino-acid polypeptide reads, in one-letter code: Adenosylhomocysteinase (466 aa).

Substrate contacts are provided by Thr-57, Asp-132, and Glu-192. 193–195 (TTT) is a binding site for NAD(+). Substrate is bound by residues Lys-222 and Asp-226. NAD(+) is bound by residues Asn-227, 256-261 (GYGDVG), Glu-279, Asn-314, 335-337 (IGH), and Asn-380.

It belongs to the adenosylhomocysteinase family. It depends on NAD(+) as a cofactor.

The protein resides in the cytoplasm. The enzyme catalyses S-adenosyl-L-homocysteine + H2O = L-homocysteine + adenosine. It participates in amino-acid biosynthesis; L-homocysteine biosynthesis; L-homocysteine from S-adenosyl-L-homocysteine: step 1/1. Its function is as follows. May play a key role in the regulation of the intracellular concentration of adenosylhomocysteine. This Rhizobium etli (strain ATCC 51251 / DSM 11541 / JCM 21823 / NBRC 15573 / CFN 42) protein is Adenosylhomocysteinase.